Reading from the N-terminus, the 736-residue chain is 1,4-alpha-glucan branching enzyme GlgB 2 (736 aa).

Asp415 functions as the Nucleophile in the catalytic mechanism. The Proton donor role is filled by Glu468.

Belongs to the glycosyl hydrolase 13 family. GlgB subfamily. As to quaternary structure, monomer.

The catalysed reaction is Transfers a segment of a (1-&gt;4)-alpha-D-glucan chain to a primary hydroxy group in a similar glucan chain.. Its pathway is glycan biosynthesis; glycogen biosynthesis. Catalyzes the formation of the alpha-1,6-glucosidic linkages in glycogen by scission of a 1,4-alpha-linked oligosaccharide from growing alpha-1,4-glucan chains and the subsequent attachment of the oligosaccharide to the alpha-1,6 position. The sequence is that of 1,4-alpha-glucan branching enzyme GlgB 2 from Rhizobium johnstonii (strain DSM 114642 / LMG 32736 / 3841) (Rhizobium leguminosarum bv. viciae).